Reading from the N-terminus, the 888-residue chain is Alanine--tRNA ligase (888 aa).

Residues His-573, His-577, Cys-676, and His-680 each contribute to the Zn(2+) site.

The protein belongs to the class-II aminoacyl-tRNA synthetase family. The cofactor is Zn(2+).

Its subcellular location is the cytoplasm. It carries out the reaction tRNA(Ala) + L-alanine + ATP = L-alanyl-tRNA(Ala) + AMP + diphosphate. In terms of biological role, catalyzes the attachment of alanine to tRNA(Ala) in a two-step reaction: alanine is first activated by ATP to form Ala-AMP and then transferred to the acceptor end of tRNA(Ala). Also edits incorrectly charged Ser-tRNA(Ala) and Gly-tRNA(Ala) via its editing domain. This Corynebacterium glutamicum (strain ATCC 13032 / DSM 20300 / JCM 1318 / BCRC 11384 / CCUG 27702 / LMG 3730 / NBRC 12168 / NCIMB 10025 / NRRL B-2784 / 534) protein is Alanine--tRNA ligase.